Here is a 336-residue protein sequence, read N- to C-terminus: NmrA-like family domain-containing oxidoreductase malD (336 aa).

NADP(+)-binding positions include 12 to 17, 40 to 44, 61 to 62, 82 to 84, lysine 140, and 163 to 166; these read GGTGNQ, RDPTS, DG, TNS, and FMEA.

Belongs to the NmrA-type oxidoreductase family.

Its function is as follows. NmrA-like family domain-containing oxidoreductase; part of the gene cluster that mediates the biosynthesis of malbrancheamide, a dichlorinated fungal indole alkaloid that belongs to a family of natural products containing a characteristic bicyclo[2.2.2]diazaoctane core. The first step of malbrancheamide biosynthesis involves coupling of L-proline and L-tryptophan by malG, a bimodular NRPS, to produce L-Pro-L-Trp aldehyde through reductive offloading. This compound undergoes spontaneous cyclization and dehydration to give a dienamine which is reverse prenylated at C-2 by malE. The other prenyltransferase present in the cluster, malB, displays modest activity, suggesting that may be a redundant gene in the pathway. Subsequently, a [4+2] Diels-Alder cyclo-addition catalyzed by the bifunctional enzyme malC forms the characteristic bicyclo[2.2.2]diazaoctane ring of premalbrancheamid. Finally, the flavin-dependent halogenase malA catalyzes the iterative dichlorination of the indole ring of premalbrancheamide to yield C-9 monochlorinated malbrancheamide B, C-8 monochlorinated isomalbrancheamide B, and dichlorinated malbrancheamide. MalA is also able to brominate premalbrancheamide at C-9 to yield malbrancheamide C, and, to a lesser extend, at C-8 to yield isomalbrancheamide C. Finally, malA can brominate C-9 monochlorinated malbrancheamide B at C-8 to yield malbrancheamide D, or C-8 monochlorinated isomalbrancheamide B at C-9 to produce isomalbrancheamide D. This Malbranchea aurantiaca protein is NmrA-like family domain-containing oxidoreductase malD.